Consider the following 550-residue polypeptide: Chaperonin GroEL (550 aa).

Residues 30-33 (TLGP), Lys51, 87-91 (DGTTT), Gly415, and Asp497 contribute to the ATP site.

The protein belongs to the chaperonin (HSP60) family. In terms of assembly, forms a cylinder of 14 subunits composed of two heptameric rings stacked back-to-back. Interacts with the co-chaperonin GroES.

It localises to the cytoplasm. It catalyses the reaction ATP + H2O + a folded polypeptide = ADP + phosphate + an unfolded polypeptide.. In terms of biological role, together with its co-chaperonin GroES, plays an essential role in assisting protein folding. The GroEL-GroES system forms a nano-cage that allows encapsulation of the non-native substrate proteins and provides a physical environment optimized to promote and accelerate protein folding. The sequence is that of Chaperonin GroEL from Yersinia enterocolitica serotype O:8 / biotype 1B (strain NCTC 13174 / 8081).